We begin with the raw amino-acid sequence, 92 residues long: Phenol 2-monooxygenase, auxiliary component DmpK (92 aa).

As to quaternary structure, homotrimer or homotetramer. Interacts with the phenol hydroxylase components DmpL (P1 component) and DmpN (P3 component).

It participates in aromatic compound metabolism; phenol degradation. In terms of biological role, dmpK is an auxiliary protein associated with the multicomponent phenol hydroxylase DmpLMNOP and it may be involved in the post-translational incorporation of iron into the oxygenase component of the phenol hydroxylase. Required for growth on phenol but not for in vitro phenol hydroxylase activity. The protein is Phenol 2-monooxygenase, auxiliary component DmpK of Pseudomonas sp. (strain CF600).